We begin with the raw amino-acid sequence, 89 residues long: Small ribosomal subunit protein uS15 (89 aa).

Belongs to the universal ribosomal protein uS15 family. In terms of assembly, part of the 30S ribosomal subunit. Forms a bridge to the 50S subunit in the 70S ribosome, contacting the 23S rRNA.

Its function is as follows. One of the primary rRNA binding proteins, it binds directly to 16S rRNA where it helps nucleate assembly of the platform of the 30S subunit by binding and bridging several RNA helices of the 16S rRNA. Forms an intersubunit bridge (bridge B4) with the 23S rRNA of the 50S subunit in the ribosome. The sequence is that of Small ribosomal subunit protein uS15 from Actinobacillus pleuropneumoniae serotype 5b (strain L20).